Consider the following 617-residue polypeptide: Dihydroxy-acid dehydratase (617 aa).

Mg(2+) is bound at residue aspartate 81. Cysteine 122 serves as a coordination point for [2Fe-2S] cluster. Mg(2+) is bound by residues aspartate 123 and lysine 124. Lysine 124 is modified (N6-carboxylysine). Cysteine 195 contributes to the [2Fe-2S] cluster binding site. Glutamate 491 contributes to the Mg(2+) binding site. Serine 517 acts as the Proton acceptor in catalysis.

The protein belongs to the IlvD/Edd family. In terms of assembly, homodimer. [2Fe-2S] cluster serves as cofactor. Requires Mg(2+) as cofactor.

The enzyme catalyses (2R)-2,3-dihydroxy-3-methylbutanoate = 3-methyl-2-oxobutanoate + H2O. It carries out the reaction (2R,3R)-2,3-dihydroxy-3-methylpentanoate = (S)-3-methyl-2-oxopentanoate + H2O. The protein operates within amino-acid biosynthesis; L-isoleucine biosynthesis; L-isoleucine from 2-oxobutanoate: step 3/4. It functions in the pathway amino-acid biosynthesis; L-valine biosynthesis; L-valine from pyruvate: step 3/4. Functions in the biosynthesis of branched-chain amino acids. Catalyzes the dehydration of (2R,3R)-2,3-dihydroxy-3-methylpentanoate (2,3-dihydroxy-3-methylvalerate) into 2-oxo-3-methylpentanoate (2-oxo-3-methylvalerate) and of (2R)-2,3-dihydroxy-3-methylbutanoate (2,3-dihydroxyisovalerate) into 2-oxo-3-methylbutanoate (2-oxoisovalerate), the penultimate precursor to L-isoleucine and L-valine, respectively. The polypeptide is Dihydroxy-acid dehydratase (Buchnera aphidicola subsp. Schizaphis graminum (strain Sg)).